The following is a 73-amino-acid chain: Metallothionein (73 aa).

Cd(2+) contacts are provided by Cys15, Cys20, Cys26, Cys28, Cys32, Cys34, Cys39, Cys46, Cys48, Cys52, Cys54, Cys58, Cys64, Cys66, Cys70, and Cys72.

It belongs to the metallothionein superfamily. Type 2 family.

Its function is as follows. The metallothioneins are involved in the cellular sequestration of toxic metal ions. This chain is Metallothionein, found in Dreissena polymorpha (Zebra mussel).